The sequence spans 126 residues: Integrin alpha-M (126 aa).

Residues Asn25, Asn78, and Asn106 are each glycosylated (N-linked (GlcNAc...) asparagine).

The protein belongs to the integrin alpha chain family. As to quaternary structure, heterodimer of an alpha and a beta chain. ITGAM associates with ITGB2. Found in a complex with CD177 and ITGB2/CD18. Interacts with JAM3. Interacts with THBD. Interacts with TMEM268; this interaction inhibits ITGAM degradation via the endosome-lysosome pathway.

Its subcellular location is the cell membrane. It is found in the membrane raft. Integrin ITGAM/ITGB2 is implicated in various adhesive interactions of monocytes, macrophages and granulocytes as well as in mediating the uptake of complement-coated particles. It is identical with CR-3, the receptor for the iC3b fragment of the third complement component. It probably recognizes the R-G-D peptide in C3b. Integrin ITGAM/ITGB2 is also a receptor for fibrinogen, factor X and ICAM1. It recognizes P1 and P2 peptides of fibrinogen gamma chain. Regulates neutrophil migration. In association with beta subunit ITGB2/CD18, required for CD177-PRTN3-mediated activation of TNF primed neutrophils. May regulate phagocytosis-induced apoptosis in extravasated neutrophils. May play a role in mast cell development. Required with TYROBP/DAP12 in microglia to control production of microglial superoxide ions which promote the neuronal apoptosis that occurs during brain development. This chain is Integrin alpha-M (ITGAM), found in Cavia porcellus (Guinea pig).